We begin with the raw amino-acid sequence, 340 residues long: Heat-inducible transcription repressor HrcA (340 aa).

Belongs to the HrcA family.

In terms of biological role, negative regulator of class I heat shock genes (grpE-dnaK-dnaJ and groELS operons). Prevents heat-shock induction of these operons. In Burkholderia vietnamiensis (strain G4 / LMG 22486) (Burkholderia cepacia (strain R1808)), this protein is Heat-inducible transcription repressor HrcA.